The primary structure comprises 88 residues: Small ribosomal subunit protein bS16c (88 aa).

Belongs to the bacterial ribosomal protein bS16 family.

The protein resides in the plastid. Its subcellular location is the chloroplast. In Sinapis alba (White mustard), this protein is Small ribosomal subunit protein bS16c.